The following is a 395-amino-acid chain: Acetate kinase (395 aa).

Residue Asn-7 participates in Mg(2+) binding. ATP is bound at residue Lys-14. Arg-85 contributes to the substrate binding site. Asp-142 serves as the catalytic Proton donor/acceptor. Residues 202–206 (HLGNG), 277–279 (DMR), and 325–329 (GIGEN) each bind ATP. Glu-378 lines the Mg(2+) pocket.

The protein belongs to the acetokinase family. Homodimer. Requires Mg(2+) as cofactor. Mn(2+) serves as cofactor.

It localises to the cytoplasm. It catalyses the reaction acetate + ATP = acetyl phosphate + ADP. It participates in metabolic intermediate biosynthesis; acetyl-CoA biosynthesis; acetyl-CoA from acetate: step 1/2. Functionally, catalyzes the formation of acetyl phosphate from acetate and ATP. Can also catalyze the reverse reaction. This chain is Acetate kinase, found in Deinococcus geothermalis (strain DSM 11300 / CIP 105573 / AG-3a).